Reading from the N-terminus, the 644-residue chain is 1-deoxy-D-xylulose-5-phosphate synthase (644 aa).

Thiamine diphosphate is bound by residues His78 and Gly120–Ala122. Residue Asp150 coordinates Mg(2+). Thiamine diphosphate-binding positions include Ala151–Ala152, Asn179, and Glu374. Asn179 contributes to the Mg(2+) binding site.

This sequence belongs to the transketolase family. DXPS subfamily. Homodimer. It depends on Mg(2+) as a cofactor. The cofactor is thiamine diphosphate.

The enzyme catalyses D-glyceraldehyde 3-phosphate + pyruvate + H(+) = 1-deoxy-D-xylulose 5-phosphate + CO2. It functions in the pathway metabolic intermediate biosynthesis; 1-deoxy-D-xylulose 5-phosphate biosynthesis; 1-deoxy-D-xylulose 5-phosphate from D-glyceraldehyde 3-phosphate and pyruvate: step 1/1. Functionally, catalyzes the acyloin condensation reaction between C atoms 2 and 3 of pyruvate and glyceraldehyde 3-phosphate to yield 1-deoxy-D-xylulose-5-phosphate (DXP). The chain is 1-deoxy-D-xylulose-5-phosphate synthase from Chlamydia pneumoniae (Chlamydophila pneumoniae).